The following is a 340-amino-acid chain: Small ribosomal subunit biogenesis GTPase RsgA (340 aa).

Positions 20–34 (ERAERAERRARRDDT) are enriched in basic and acidic residues. The tract at residues 20–42 (ERAERAERRARRDDTSLDAGDYG) is disordered. The region spanning 116–274 (RGQLKPVAAN…LIDSPGIREF (159 aa)) is the CP-type G domain. GTP-binding positions include 163-166 (NKTD) and 216-224 (GQSGVGKSS). Residues Cys-298, Cys-303, His-305, and Cys-311 each coordinate Zn(2+).

The protein belongs to the TRAFAC class YlqF/YawG GTPase family. RsgA subfamily. Monomer. Associates with 30S ribosomal subunit, binds 16S rRNA. It depends on Zn(2+) as a cofactor.

Its subcellular location is the cytoplasm. Functionally, one of several proteins that assist in the late maturation steps of the functional core of the 30S ribosomal subunit. Helps release RbfA from mature subunits. May play a role in the assembly of ribosomal proteins into the subunit. Circularly permuted GTPase that catalyzes slow GTP hydrolysis, GTPase activity is stimulated by the 30S ribosomal subunit. In Chromohalobacter salexigens (strain ATCC BAA-138 / DSM 3043 / CIP 106854 / NCIMB 13768 / 1H11), this protein is Small ribosomal subunit biogenesis GTPase RsgA.